The primary structure comprises 380 residues: Ceramide-binding protein svf1 (380 aa).

The interval 1–18 is peripherally associates with membranes; it reads MKAWLQSSISYYTGTAEP.

It belongs to the SVF1 family.

Its subcellular location is the golgi apparatus. It localises to the cis-Golgi network membrane. It is found in the endoplasmic reticulum membrane. The protein localises to the cytoplasm. The protein resides in the nucleus. Ceramide-binding protein that may transfer ceramides from the endoplasmic reticulum membrane to the cis-Golgi network membrane, and is thereby required for the biosynthesis of complex sphingolipids. This Schizosaccharomyces pombe (strain 972 / ATCC 24843) (Fission yeast) protein is Ceramide-binding protein svf1.